The sequence spans 446 residues: StAR-related lipid transfer protein 3 (446 aa).

The Cytoplasmic portion of the chain corresponds to M1–R52. Positions I47 to S218 constitute an MENTAL domain. The helical transmembrane segment at T53 to L73 threads the bilayer. At N74 to S95 the chain is on the extracellular side. Residues F96–V116 traverse the membrane as a helical segment. At L117–H121 the chain is on the cytoplasmic side. Residues W122–L142 form a helical membrane-spanning segment. Topologically, residues S143–G149 are extracellular. Residues A150 to L170 traverse the membrane as a helical segment. Topologically, residues D171–A446 are cytoplasmic. An FFAT motif is present at residues Q207–E213. Residues S210, S218, and S222 each carry the phosphoserine modification. In terms of domain architecture, START spans S231 to A444.

This sequence belongs to the STARD3 family. As to quaternary structure, homodimer. Interacts (via the MENTAL domain) with STARD3NL. Interacts (via phosphorylated FFAT motif) with VAPA (via MSP domain). Interacts (via phosphorylated FFAT motif) with VAPB (via MSP domain). Interacts (via phosphorylated FFAT motif) with MOSPD2 (via MSP domain); this interaction allows enrichment of MOSPD2 around endosomes. In terms of processing, phosphorylation at Ser-210 is necessary and sufficient for the direct interaction of the phosphorylated FFAT motif with the MSP domain of MOSPD2, VAPA and VAPB and allows the tethering of two membranes that participates in the formation of ER-endosome contacts. Phosphorylation of the FFAT motif leads to conformation changes. Additional phosphorylations around the core FFAT motif (QFYSPPE) are not essential but strengthen the interaction with MOSPD2, VAPA and VAPB. Phosphorylation at Ser-210 of FFAT motif drives membrane tethering between the endoplasmic reticulum and late endosomes via interaction with VAPA and VAPB that in turn allows the efficient transport of sterol mediated by the START domain.

It localises to the late endosome membrane. The catalysed reaction is cholesterol(in) = cholesterol(out). Its function is as follows. Sterol-binding protein that mediates cholesterol transport from the endoplasmic reticulum to endosomes. The sterol transport mechanism is triggered by phosphorylation of FFAT motif that leads to membrane tethering between the endoplasmic reticulum and late endosomes via interaction with VAPA and VAPB. Acts as a lipid transfer protein that redirects sterol to the endosome at the expense of the cell membrane and favors membrane formation inside endosomes. May also mediate cholesterol transport between other membranes, such as mitochondria membrane or cell membrane. However, such results need additional experimental evidences; probably mainly mediates cholesterol transport from the endoplasmic reticulum to endosomes. Does not activate transcriptional cholesterol sensing. Able to bind other lipids, such as lutein, a xanthophyll carotenoids that form the macular pigment of the retina. This Mus musculus (Mouse) protein is StAR-related lipid transfer protein 3.